Reading from the N-terminus, the 149-residue chain is Interleukin-2 (149 aa).

The signal sequence occupies residues 1-20 (MYRMQLLSCIALTLAVLANS). Thr23 carries an O-linked (GalNAc...) threonine glycan. Residues Cys78 and Cys121 are joined by a disulfide bond. Residue Asn106 is glycosylated (N-linked (GlcNAc...) asparagine).

The protein belongs to the IL-2 family.

The protein resides in the secreted. Functionally, cytokine produced by activated CD4-positive helper T-cells and to a lesser extend activated CD8-positive T-cells and natural killer (NK) cells that plays pivotal roles in the immune response and tolerance. Binds to a receptor complex composed of either the high-affinity trimeric IL-2R (IL2RA/CD25, IL2RB/CD122 and IL2RG/CD132) or the low-affinity dimeric IL-2R (IL2RB and IL2RG). Interaction with the receptor leads to oligomerization and conformation changes in the IL-2R subunits resulting in downstream signaling starting with phosphorylation of JAK1 and JAK3. In turn, JAK1 and JAK3 phosphorylate the receptor to form a docking site leading to the phosphorylation of several substrates including STAT5. This process leads to activation of several pathways including STAT, phosphoinositide-3-kinase/PI3K and mitogen-activated protein kinase/MAPK pathways. Functions as a T-cell growth factor and can increase NK-cell cytolytic activity as well. Promotes strong proliferation of activated B-cells and subsequently immunoglobulin production. Plays a pivotal role in regulating the adaptive immune system by controlling the survival and proliferation of regulatory T-cells, which are required for the maintenance of immune tolerance. Moreover, participates in the differentiation and homeostasis of effector T-cell subsets, including Th1, Th2, Th17 as well as memory CD8-positive T-cells. This Equus caballus (Horse) protein is Interleukin-2 (IL2).